Consider the following 165-residue polypeptide: Large ribosomal subunit protein uL10 (165 aa).

Belongs to the universal ribosomal protein uL10 family. As to quaternary structure, part of the ribosomal stalk of the 50S ribosomal subunit. The N-terminus interacts with L11 and the large rRNA to form the base of the stalk. The C-terminus forms an elongated spine to which L12 dimers bind in a sequential fashion forming a multimeric L10(L12)X complex.

In terms of biological role, forms part of the ribosomal stalk, playing a central role in the interaction of the ribosome with GTP-bound translation factors. The polypeptide is Large ribosomal subunit protein uL10 (Deinococcus deserti (strain DSM 17065 / CIP 109153 / LMG 22923 / VCD115)).